Here is a 473-residue protein sequence, read N- to C-terminus: uncharacterized protein (473 aa).

Residues 1–86 form a disordered region; the sequence is MSSSPTESEI…NTSNYGSSRD (86 aa). A compositionally biased stretch (basic and acidic residues) spans 10-19; that stretch reads ILPKESHNSI. Composition is skewed to polar residues over residues 20 to 39 and 55 to 68; these read DEQSQQPANTDTLVKDNSFN and EPVQSQDPISPNMA. Ser64 is subject to Phosphoserine. Positions 69–83 are enriched in low complexity; that stretch reads SNESGNSENTSNYGS. RRM domains are found at residues 95-165, 188-260, and 305-370; these read LWMG…NHLF, IFVG…PIRV, and VFVG…RIRL. The disordered stretch occupies residues 448 to 473; it reads MHIPENGNSDTMPVPNTQGKHLSAEE. A compositionally biased stretch (polar residues) spans 453-467; that stretch reads NGNSDTMPVPNTQGK.

This is an uncharacterized protein from Schizosaccharomyces pombe (strain 972 / ATCC 24843) (Fission yeast).